Consider the following 104-residue polypeptide: SOSS complex subunit C (104 aa).

Residue A2 is modified to N-acetylalanine. A Phosphoserine modification is found at S50.

This sequence belongs to the SOSS-C family. As to quaternary structure, component of the SOSS complex, composed of SOSS-B (SOSS-B1/NABP2 or SOSS-B2/NABP1), SOSS-A/INTS3 and SOSS-C/INIP. SOSS complexes containing SOSS-B1/NABP2 are more abundant than complexes containing SOSS-B2/NABP1. Interacts with INTS3; the interaction is direct.

Its subcellular location is the nucleus. Component of the SOSS complex, a multiprotein complex that functions downstream of the MRN complex to promote DNA repair and G2/M checkpoint. The SOSS complex associates with single-stranded DNA at DNA lesions and influences diverse endpoints in the cellular DNA damage response including cell-cycle checkpoint activation, recombinational repair and maintenance of genomic stability. Required for efficient homologous recombination-dependent repair of double-strand breaks (DSBs) and ATM-dependent signaling pathways. The polypeptide is SOSS complex subunit C (Inip) (Mus musculus (Mouse)).